Consider the following 121-residue polypeptide: Small ribosomal subunit protein uS13 (121 aa).

Residues 99–121 form a disordered region; the sequence is GQRTRTNARTRRGARKTVAGKKK. Basic residues predominate over residues 100-121; sequence QRTRTNARTRRGARKTVAGKKK.

The protein belongs to the universal ribosomal protein uS13 family. Part of the 30S ribosomal subunit. Forms a loose heterodimer with protein S19. Forms two bridges to the 50S subunit in the 70S ribosome.

Located at the top of the head of the 30S subunit, it contacts several helices of the 16S rRNA. In the 70S ribosome it contacts the 23S rRNA (bridge B1a) and protein L5 of the 50S subunit (bridge B1b), connecting the 2 subunits; these bridges are implicated in subunit movement. Contacts the tRNAs in the A and P-sites. The protein is Small ribosomal subunit protein uS13 of Synechococcus sp. (strain RCC307).